Consider the following 367-residue polypeptide: MNVFDTLQQSKKLPDVYRQMTRVELEERIRQHKERLGKKLLMLGHHYQRDEVFQFADQTGDSLQLAQIAAKEKEAQFIVFCGVHFMAETADLLTSEEQTVLLPDLRAGCSMADMADIHQTERAWERLQLMFGDTILPLTYVNSTAAIKAFCGRNGGATVTSSNAKKMLEWAFTQKERLLFLPDQHLGRNTAYELGIPLEAMAVWNPETERLETDQPLENIRVILWKGHCSVHEKFTVKHIEHLRKNEPDMSIIVHPECTHDVVIHADDAGSTHYIIKTIESADSGTKWAVGTEMNLVNRLANEHPDKEIVSLNPTMCPCLTMNRIDIEHLCWSLDQLAEGVFQHPIKVEDKDRGPALLALQRMLDRA.

His45 and Ser62 together coordinate iminosuccinate. Cys109 provides a ligand contact to [4Fe-4S] cluster. Residues 140 to 142 and Ser161 contribute to the iminosuccinate site; that span reads YVN. Cys229 serves as a coordination point for [4Fe-4S] cluster. Iminosuccinate contacts are provided by residues 255 to 257 and Thr272; that span reads HPE. A [4Fe-4S] cluster-binding site is contributed by Cys319.

This sequence belongs to the quinolinate synthase family. Type 3 subfamily. [4Fe-4S] cluster serves as cofactor.

It is found in the cytoplasm. The enzyme catalyses iminosuccinate + dihydroxyacetone phosphate = quinolinate + phosphate + 2 H2O + H(+). The protein operates within cofactor biosynthesis; NAD(+) biosynthesis; quinolinate from iminoaspartate: step 1/1. Functionally, catalyzes the condensation of iminoaspartate with dihydroxyacetone phosphate to form quinolinate. This Halalkalibacterium halodurans (strain ATCC BAA-125 / DSM 18197 / FERM 7344 / JCM 9153 / C-125) (Bacillus halodurans) protein is Quinolinate synthase.